The sequence spans 1688 residues: Voltage-dependent L-type calcium channel subunit alpha-1S (1688 aa).

The interval 1–24 (MDAMGSAAEEGTQKKKRRPLVPPP) is disordered. At 1-51 (MDAMGSAAEEGTQKKKRRPLVPPPPRPPRALFCLGLQNPFRKFCINIVEWK) the chain is on the cytoplasmic side. Residues 38–335 (NPFRKFCINI…LVLGVLSGEF (298 aa)) form an I repeat. The chain crosses the membrane as a helical span at residues 52–70 (PFEMIILLTIFANCVALAI). Over 71–88 (FLPMPEDDTNSTNSVLEK) the chain is Extracellular. An N-linked (GlcNAc...) asparagine glycan is attached at Asn80. The chain crosses the membrane as a helical span at residues 89-108 (VEYIFLFIFTIESFLKIVAY). Residues 109–120 (GFILHTDAYLRN) are Cytoplasmic-facing. A helical transmembrane segment spans residues 121 to 139 (GWNILDFTIVSVGVFSVLL). The Extracellular segment spans residues 140-158 (EQISKLQGLPAPGKSSGFN). The chain crosses the membrane as a helical span at residues 159–177 (VKALRAFRVLRPLRLVSGV). Residues 178–196 (PSLQVVLNSIIKAMIPLLH) are Cytoplasmic-facing. A helical membrane pass occupies residues 197-216 (IALLVLFMIIIYAIVGLELF). At 217 to 307 (SGKMHKTCYF…WVNDAIGNEW (91 aa)) the chain is on the extracellular side. Asn255 carries an N-linked (GlcNAc...) asparagine glycan. Residue Glu290 coordinates Ca(2+). Residues 308 to 332 (PWIYFVSLILLGSFFVLNLVLGVLS) traverse the membrane as a helical segment. At 333–431 (GEFTKEREKA…RKSRDLVKSR (99 aa)) the chain is on the cytoplasmic side. The segment at 355-372 (QAMDEDLRGYLDWITHAE) is binding to the beta subunit. The II repeat unit spans residues 417-663 (HRLLRRKSRD…VFLAIAVDNL (247 aa)). Residues 432-450 (FFYWLVIIIILLNTVIIAT) traverse the membrane as a helical segment. The Extracellular segment spans residues 451–465 (EHHHQPDSLTKAQDI). The helical transmembrane segment at 466–485 (ANEVLLALFTMEMIVKIYAL) threads the bilayer. The Cytoplasmic portion of the chain corresponds to 486 to 493 (GFQSYFMS). A helical transmembrane segment spans residues 494–512 (LFNRFDSFVVCTGLLEVML). Over 513–522 (VASDIMSPLG) the chain is Extracellular. A helical transmembrane segment spans residues 523-541 (ISVLRCIRLLRIFKITRYW). Over 542 to 560 (TSLNNLVASLLNSVRSIAS) the chain is Cytoplasmic. A helical transmembrane segment spans residues 561–580 (LLLLLFLFMIIFALLGMQMF). Residues 581–635 (GGKFDFEDLEVRRSTFDTFPQALITVFQILTGEDWTAVMYNGIMAYGGPTYSGMS) lie on the Extracellular side of the membrane. Glu613 provides a ligand contact to Ca(2+). The chain crosses the membrane as a helical span at residues 636 to 660 (VCIYFIILFVCGNYILLNVFLAIAV). Topologically, residues 661–797 (DNLAEAENLT…VLCHRIINAT (137 aa)) are cytoplasmic. Disordered regions lie at residues 672–696 (AQKA…TEEE) and 729–755 (EIKD…ISPR). Residues 740–749 (PGDDEEEEPE) are compositionally biased toward acidic residues. One copy of the III repeat lies at 784–1066 (NKIRVLCHRI…IFVGFVIVTF (283 aa)). A helical transmembrane segment spans residues 798–816 (TFTNFILLFILLSSISLAA). At 817–832 (EDPIQPESFRNKVLSK) the chain is on the extracellular side. Residues 833–852 (LDIVFTVIFTTEIVLKMTAY) traverse the membrane as a helical segment. Residues 853–864 (GAFLHKGSFCRN) lie on the Cytoplasmic side of the membrane. The chain crosses the membrane as a helical span at residues 865-883 (SFNILDLSVVGVSLISMGI). Topologically, residues 884–890 (ESSAISV) are extracellular. Residues 891–909 (VKILRVLRVLRPLRAINRA) form a helical membrane-spanning segment. The Cytoplasmic portion of the chain corresponds to 910-928 (KGLKHVVQCLFVAIKTIGN). Residues 929 to 948 (IVLVTTLLQFMFSCIGVQLF) traverse the membrane as a helical segment. Residues 949–1038 (KGKFYSCTDT…MGPIYNYRIE (90 aa)) lie on the Extracellular side of the membrane. Residues 986–1075 (RVWSHSDFHF…FQEQGEQEYK (90 aa)) are dihydropyridine binding. A Ca(2+)-binding site is contributed by Glu1012. A helical transmembrane segment spans residues 1039 to 1063 (IAVFFIVYIILIAFFMMNIFVGFVI). At 1064 to 1116 (VTFQEQGEQEYKDCELDKNQRQCVQYALKARPLRRYIPKNPHQYKIWYVVTSS) the chain is on the cytoplasmic side. The stretch at 1103 to 1371 (NPHQYKIWYV…LFVAVIMDNF (269 aa)) is one IV repeat. A helical membrane pass occupies residues 1117 to 1135 (YFEYLMFFLITLNTISLGM). Topologically, residues 1136–1150 (QHYGQTAEFSYMSDI) are extracellular. A helical membrane pass occupies residues 1151 to 1170 (LNVAFTGIFTVEMFLKLAAF). Topologically, residues 1171–1178 (KAKGYFGD) are cytoplasmic. A helical membrane pass occupies residues 1179-1197 (PWNVFDFLIVIGSVIDVIL). Over 1198–1218 (SEIDTPGIPATPGAEESSRIS) the chain is Extracellular. The chain crosses the membrane as a helical span at residues 1219-1237 (ITFFRLFRVLRLVKLLSRG). Residues 1238-1256 (EGVRTLLWTFIKSFQALPY) lie on the Cytoplasmic side of the membrane. Residues 1257-1276 (VALLIVMLFFIYAVIGMQVF) traverse the membrane as a helical segment. The Extracellular portion of the chain corresponds to 1277-1343 (GKIALVDGTH…GEEYTCGTSF (67 aa)). The tract at residues 1324 to 1390 (LCDPMSDFQP…LGPHHLDEFK (67 aa)) is dihydropyridine binding. Positions 1336–1379 (EYTCGTSFAYFYFISFYMLCAFLIINLFVAVIMDNFDYLTRDWS) are phenylalkylamine binding. The chain crosses the membrane as a helical span at residues 1344–1368 (AYFYFISFYMLCAFLIINLFVAVIM). The Cytoplasmic segment spans residues 1369-1688 (DNFDYLTRDW…TNSSISQATN (320 aa)). 2 disordered regions span residues 1635–1664 (PEPV…RLTT) and 1669–1688 (RVQQ…QATN). Polar residues predominate over residues 1678–1688 (DTNSSISQATN).

Belongs to the calcium channel alpha-1 subunit (TC 1.A.1.11) family. In terms of assembly, multisubunit complex consisting of alpha-1, alpha-2, beta and delta subunits in a 1:1:1:1 ratio. The channel activity is directed by the pore-forming and voltage-sensitive alpha-1 subunit. In many cases, this subunit is sufficient to generate voltage-sensitive calcium channel activity. The auxiliary subunits beta and alpha-2/delta linked by a disulfide bridge regulate the channel activity. An additional gamma subunit is present only in skeletal muscle L-type channel. Phosphorylation by PKA stimulates the calcium channel function. In terms of tissue distribution, skeletal muscle specific.

It localises to the membrane. Its function is as follows. Voltage-sensitive calcium channels (VSCC) mediate the entry of calcium ions into excitable cells and are also involved in a variety of calcium-dependent processes, including muscle contraction, gene expression, cell motility, cell division and cell death. The isoform alpha-1S gives rise to L-type calcium currents. Long-lasting (L-type) calcium channels belong to the 'high-voltage activated' (HVA) group. They are blocked by dihydropyridines (DHP), phenylalkylamines, and by benzothiazepines. Calcium channels containing the alpha-1S subunit play an important role in excitation-contraction coupling in skele|tal muscle. This is Voltage-dependent L-type calcium channel subunit alpha-1S from Aquarana catesbeiana (American bullfrog).